The chain runs to 466 residues: ATP synthase subunit beta (466 aa).

153–160 is an ATP binding site; sequence GGAGVGKT.

The protein belongs to the ATPase alpha/beta chains family. In terms of assembly, F-type ATPases have 2 components, CF(1) - the catalytic core - and CF(0) - the membrane proton channel. CF(1) has five subunits: alpha(3), beta(3), gamma(1), delta(1), epsilon(1). CF(0) has three main subunits: a(1), b(2) and c(9-12). The alpha and beta chains form an alternating ring which encloses part of the gamma chain. CF(1) is attached to CF(0) by a central stalk formed by the gamma and epsilon chains, while a peripheral stalk is formed by the delta and b chains.

The protein resides in the cell membrane. The enzyme catalyses ATP + H2O + 4 H(+)(in) = ADP + phosphate + 5 H(+)(out). Its function is as follows. Produces ATP from ADP in the presence of a proton gradient across the membrane. The catalytic sites are hosted primarily by the beta subunits. The sequence is that of ATP synthase subunit beta from Clostridium acetobutylicum (strain ATCC 824 / DSM 792 / JCM 1419 / IAM 19013 / LMG 5710 / NBRC 13948 / NRRL B-527 / VKM B-1787 / 2291 / W).